Reading from the N-terminus, the 310-residue chain is tRNA-cytidine(32) 2-sulfurtransferase (310 aa).

The PP-loop motif motif lies at 45–50 (SGGKDS). [4Fe-4S] cluster contacts are provided by Cys-120, Cys-123, and Cys-211.

This sequence belongs to the TtcA family. In terms of assembly, homodimer. It depends on Mg(2+) as a cofactor. Requires [4Fe-4S] cluster as cofactor.

The protein localises to the cytoplasm. The catalysed reaction is cytidine(32) in tRNA + S-sulfanyl-L-cysteinyl-[cysteine desulfurase] + AH2 + ATP = 2-thiocytidine(32) in tRNA + L-cysteinyl-[cysteine desulfurase] + A + AMP + diphosphate + H(+). Its pathway is tRNA modification. In terms of biological role, catalyzes the ATP-dependent 2-thiolation of cytidine in position 32 of tRNA, to form 2-thiocytidine (s(2)C32). The sulfur atoms are provided by the cysteine/cysteine desulfurase (IscS) system. In Shewanella oneidensis (strain ATCC 700550 / JCM 31522 / CIP 106686 / LMG 19005 / NCIMB 14063 / MR-1), this protein is tRNA-cytidine(32) 2-sulfurtransferase.